The sequence spans 267 residues: Geranylgeranylglyceryl phosphate synthase (267 aa).

2 residues coordinate Mg(2+): Asp-23 and Ser-52. Residues 173-179 (YLEAGSG), 205-206 (GG), and 227-228 (GT) each bind sn-glycerol 1-phosphate.

The protein belongs to the GGGP/HepGP synthase family. Group II subfamily. Mg(2+) serves as cofactor.

It is found in the cytoplasm. It carries out the reaction sn-glycerol 1-phosphate + (2E,6E,10E)-geranylgeranyl diphosphate = sn-3-O-(geranylgeranyl)glycerol 1-phosphate + diphosphate. It functions in the pathway membrane lipid metabolism; glycerophospholipid metabolism. Prenyltransferase that catalyzes the transfer of the geranylgeranyl moiety of geranylgeranyl diphosphate (GGPP) to the C3 hydroxyl of sn-glycerol-1-phosphate (G1P). This reaction is the first ether-bond-formation step in the biosynthesis of archaeal membrane lipids. In Caldivirga maquilingensis (strain ATCC 700844 / DSM 13496 / JCM 10307 / IC-167), this protein is Geranylgeranylglyceryl phosphate synthase.